The primary structure comprises 115 residues: NADH-ubiquinone oxidoreductase chain 3 (115 aa).

3 helical membrane-spanning segments follow: residues I3 to W23, F55 to L75, and T86 to W106.

Belongs to the complex I subunit 3 family. As to quaternary structure, core subunit of respiratory chain NADH dehydrogenase (Complex I) which is composed of 45 different subunits. Interacts with TMEM186. Interacts with TMEM242.

Its subcellular location is the mitochondrion inner membrane. The catalysed reaction is a ubiquinone + NADH + 5 H(+)(in) = a ubiquinol + NAD(+) + 4 H(+)(out). Its function is as follows. Core subunit of the mitochondrial membrane respiratory chain NADH dehydrogenase (Complex I) which catalyzes electron transfer from NADH through the respiratory chain, using ubiquinone as an electron acceptor. Essential for the catalytic activity of complex I. The polypeptide is NADH-ubiquinone oxidoreductase chain 3 (Sus scrofa (Pig)).